Reading from the N-terminus, the 397-residue chain is Acetate kinase (397 aa).

Mg(2+) is bound at residue N7. K14 serves as a coordination point for ATP. A substrate-binding site is contributed by R90. D147 functions as the Proton donor/acceptor in the catalytic mechanism. ATP-binding positions include 207 to 211 (HLGNG), 282 to 284 (DFR), and 330 to 334 (GLGEN). Residue E383 participates in Mg(2+) binding.

It belongs to the acetokinase family. As to quaternary structure, homodimer. The cofactor is Mg(2+). Mn(2+) serves as cofactor.

Its subcellular location is the cytoplasm. It carries out the reaction acetate + ATP = acetyl phosphate + ADP. It participates in metabolic intermediate biosynthesis; acetyl-CoA biosynthesis; acetyl-CoA from acetate: step 1/2. In terms of biological role, catalyzes the formation of acetyl phosphate from acetate and ATP. Can also catalyze the reverse reaction. This chain is Acetate kinase, found in Clostridium botulinum (strain ATCC 19397 / Type A).